The sequence spans 550 residues: MRAIETLRTALAAIIEEEGLAWPSKTVIEPPRDPRHGDLSVNSAMLLAREAKTNPRELAQKFAARLLERCPDVEKAEAAGPGFCNVTFSQAFWRQTVTDIESAGQAYGESREPGRRVLLEYVSANPTGPLHVGHGRGAAVGDSLARLLRKAGHHVHTEYYINDAGRQMRLLGLSVWLRVLELAGRPVEWPEDYYRGDYIIDIAREMLTANPALPDMPAPEGEDLCYEKAMTDILNGIKDDLRDFRVEHLRWFSEKTLVETGAVDAAFAALGKSGYTYEQDNAFWFATEQLGDDKNRVLKKSDGSLTYFASDIAYHHDKFERGYDWLIDVWGADHHGYIPRMRAAITAMGKERDSFDVVLIQLVNLLREGQPVSMSTRAGTFETLADVIKEVGTDAARFMFLSRKSDSPLDFDLELAKQRSLDNPVYYVQYAHARICAVLRRAAERGFVLPEKSDAALLAPLDTAEDMTLLRKAAAFEDMLFAAAQSLGVHHVSHYLTELAGLLHSYYARHQVLLADDAPRTLARLALLRSVGQVVRNGLDVLGVSAPESM.

Residues 124–134 (ANPTGPLHVGH) carry the 'HIGH' region motif.

The protein belongs to the class-I aminoacyl-tRNA synthetase family. As to quaternary structure, monomer.

Its subcellular location is the cytoplasm. It catalyses the reaction tRNA(Arg) + L-arginine + ATP = L-arginyl-tRNA(Arg) + AMP + diphosphate. In Desulfovibrio desulfuricans (strain ATCC 27774 / DSM 6949 / MB), this protein is Arginine--tRNA ligase.